We begin with the raw amino-acid sequence, 247 residues long: Lysosomal membrane ascorbate-dependent ferrireductase CYB561A3 (247 aa).

The Cytoplasmic segment spans residues 1 to 3 (MRG). The chain crosses the membrane as a helical span at residues 4–24 (IVGFYITYLLCLILGIACVVL). Residues 13-223 (LCLILGIACV…FGLVVLKILS (211 aa)) enclose the Cytochrome b561 domain. The Lumenal segment spans residues 25–46 (VVHWNFMYRDGFAWDGSSKNFN). A helical transmembrane segment spans residues 47–67 (WHPVLMVTGMLVLYGNAAVVY). Heme b-binding residues include His-48 and Arg-68. Topologically, residues 68-82 (RIPLTWGHNKLPWKL) are cytoplasmic. L-ascorbate contacts are provided by Lys-77 and Lys-81. A helical transmembrane segment spans residues 83-103 (LHAGLLLLSFIFSVIGLCAVF). Heme b contacts are provided by residues His-84, 113 to 116 (NLYS), and His-118. Over 104–120 (NFHNVHHTANLYSLHSW) the chain is Lumenal. Residues 121–141 (VGICTAALFTAQWVMGFTSFL) form a helical membrane-spanning segment. Residues 142–155 (LPCTPMAVRAFVKP) lie on the Cytoplasmic side of the membrane. Position 150 (Arg-150) interacts with L-ascorbate. A helical transmembrane segment spans residues 156–176 (THVWMGAMILVLSIVSCISGI). Heme b-binding residues include His-157 and Glu-178. The Lumenal segment spans residues 177-201 (NEKLFFVLKETTNGTKPYSALPPEA). N-linked (GlcNAc...) asparagine glycosylation is present at Asn-189. The helical transmembrane segment at 202-222 (VAANSLGVIIVAFGLVVLKIL) threads the bilayer. The Cytoplasmic segment spans residues 223–247 (SNQMWQRPEPGDDEGVYRPLAYDGS). Gln-228 contributes to the heme b binding site.

Homodimer. It depends on heme b as a cofactor.

It is found in the late endosome membrane. Its subcellular location is the lysosome membrane. The catalysed reaction is Fe(3+)(out) + L-ascorbate(in) = monodehydro-L-ascorbate radical(in) + Fe(2+)(out) + H(+). In terms of biological role, transmembrane reductase that uses ascorbate as an electron donor in the cytoplasm and transfers electrons across membranes to reduce iron cations Fe(3+) into Fe(2+) in the lumen of the late endosome and lysosome. Reduced iron can then be extruded from the late endosome and lysosome to the cytoplasm by divalent metal-specific transporters. It is therefore most probably involved in endosomal and lysosomal cellular iron homeostasis. This is Lysosomal membrane ascorbate-dependent ferrireductase CYB561A3 (cyb561a3a) from Danio rerio (Zebrafish).